Consider the following 330-residue polypeptide: Aspartate--ammonia ligase (330 aa).

The protein belongs to the class-II aminoacyl-tRNA synthetase family. AsnA subfamily.

The protein localises to the cytoplasm. It catalyses the reaction L-aspartate + NH4(+) + ATP = L-asparagine + AMP + diphosphate + H(+). The protein operates within amino-acid biosynthesis; L-asparagine biosynthesis; L-asparagine from L-aspartate (ammonia route): step 1/1. This Yersinia enterocolitica serotype O:8 / biotype 1B (strain NCTC 13174 / 8081) protein is Aspartate--ammonia ligase.